A 204-amino-acid polypeptide reads, in one-letter code: Protease (204 aa).

Active-site residues include H54, D71, and C121.

This sequence belongs to the peptidase C5 family. Interacts with protease cofactor pVI-C; this interaction is necessary for protease activation.

The protein localises to the virion. The protein resides in the host nucleus. It catalyses the reaction Cleaves proteins of the adenovirus and its host cell at two consensus sites: -Yaa-Xaa-Gly-Gly-|-Xaa- and -Yaa-Xaa-Gly-Xaa-|-Gly- (in which Yaa is Met, Ile or Leu, and Xaa is any amino acid).. Its activity is regulated as follows. Requires DNA and protease cofactor for maximal activation. Inside nascent virions, becomes partially activated by binding to the viral DNA, allowing it to cleave the cofactor that binds to the protease and fully activates it. Actin, like the viral protease cofactor, seems to act as a cofactor in the cleavage of cytokeratin 18 and of actin itself. Cleaves viral precursor proteins (pTP, pIIIa, pVI, pVII, pVIII, and pX) inside newly assembled particles giving rise to mature virions. Protease complexed to its cofactor slides along the viral DNA to specifically locate and cleave the viral precursors. Mature virions have a weakened organization compared to the unmature virions, thereby facilitating subsequent uncoating. Without maturation, the particle lacks infectivity and is unable to uncoat. Late in adenovirus infection, in the cytoplasm, may participate in the cytoskeleton destruction. Cleaves host cell cytoskeletal keratins K7 and K18. In Frog adenovirus 1 (strain ATCC VR-896) (FrAdV-1), this protein is Protease.